Consider the following 161-residue polypeptide: MDSLSKKSSQDIINELSNYLGIEKHNQTVFHLTHINEKEKKLSLKNGHELAPEPWFIVDENGEVKTMFSVKTLIEFLQNAKEVQKDNFELKLEKAIYQQIPIDFNDVWTVAMDEIKHQVAKGVKEVNIDLDQLISNIHAKHPNLFINMKEMMQKVKPNERL.

This sequence belongs to the UPF0763 family.

The protein is UPF0763 protein Cla_1130 of Campylobacter lari (strain RM2100 / D67 / ATCC BAA-1060).